The primary structure comprises 137 residues: Large ribosomal subunit protein uL16 (137 aa).

A compositionally biased stretch (basic residues) spans 1 to 17 (MLQPKRTKFRKTHKGRN). Residues 1-24 (MLQPKRTKFRKTHKGRNRGLANSG) are disordered.

It belongs to the universal ribosomal protein uL16 family. As to quaternary structure, part of the 50S ribosomal subunit.

Functionally, binds 23S rRNA and is also seen to make contacts with the A and possibly P site tRNAs. The protein is Large ribosomal subunit protein uL16 of Aeromonas hydrophila subsp. hydrophila (strain ATCC 7966 / DSM 30187 / BCRC 13018 / CCUG 14551 / JCM 1027 / KCTC 2358 / NCIMB 9240 / NCTC 8049).